Here is a 962-residue protein sequence, read N- to C-terminus: Protease 3 (962 aa).

A signal peptide spans 1–23 (MPRSTWFKALLLLVALWGPAVQA). His-88 contacts Zn(2+). The active-site Proton acceptor is the Glu-91. Positions 92 and 169 each coordinate Zn(2+).

The protein belongs to the peptidase M16 family. Monomer. Zn(2+) is required as a cofactor.

The protein resides in the periplasm. The enzyme catalyses Preferential cleavage of 16-Tyr-|-Leu-17 and 25-Phe-|-Tyr-26 bonds of oxidized insulin B chain. Also acts on other substrates of Mw less than 7 kDa such as insulin and glucagon.. Its function is as follows. Endopeptidase that degrades small peptides of less than 7 kDa, such as glucagon and insulin. This is Protease 3 (ptrA) from Salmonella typhimurium (strain LT2 / SGSC1412 / ATCC 700720).